Reading from the N-terminus, the 122-residue chain is Ribosome-binding factor A (122 aa).

It belongs to the RbfA family. In terms of assembly, monomer. Binds 30S ribosomal subunits, but not 50S ribosomal subunits or 70S ribosomes.

The protein localises to the cytoplasm. One of several proteins that assist in the late maturation steps of the functional core of the 30S ribosomal subunit. Associates with free 30S ribosomal subunits (but not with 30S subunits that are part of 70S ribosomes or polysomes). Required for efficient processing of 16S rRNA. May interact with the 5'-terminal helix region of 16S rRNA. In Pelagibacter ubique (strain HTCC1062), this protein is Ribosome-binding factor A.